The sequence spans 470 residues: Regulator of microtubule dynamics protein 3 (470 aa).

Residues 1–12 (MSRLGALGGSRA) are Mitochondrial intermembrane-facing. A helical membrane pass occupies residues 13–35 (GLGLLLGTAAGLGFLCVLYSQRW). Residues 36 to 470 (KRTQRHGRSH…DLEELEVILG (435 aa)) are Cytoplasmic-facing. Serine 44, serine 46, serine 50, and serine 57 each carry phosphoserine. The stretch at 91–125 (LDRLDFVLTSLMALRREVEELQRSLQGLAGEIVGE) forms a coiled coil. The short motif at 157 to 163 (VYFTASS) is the FFAT element. Threonine 160 carries the phosphothreonine modification. Residues 168 to 205 (TDAESEGGYTTANAESDYERDSDKESGDAEDEVSCETV) form a disordered region. A phosphoserine mark is found at serine 183, serine 193, serine 212, and serine 233. Residues 184–194 (DYERDSDKESG) show a composition bias toward basic and acidic residues.

It belongs to the RMDN family. As to quaternary structure, interacts with PTPN2. Interacts with microtubules. Interacts with VAPB. Interacts (via FFAT motif) with MOSPD2 (via MSP domain). Interacts (via phosphorylated FFAT motif) with MOSPD2, VAPA and VAPB. Post-translationally, phosphorylation at Thr-160 of the FFAT motif activates interaction with MOSPD2, VAPA and VAPB.

Its subcellular location is the mitochondrion outer membrane. It localises to the cytoplasm. The protein resides in the nucleus. The protein localises to the cytoskeleton. It is found in the spindle. Its subcellular location is the spindle pole. In terms of biological role, involved in cellular calcium homeostasis regulation. May participate in differentiation and apoptosis of keratinocytes. Overexpression induces apoptosis. The polypeptide is Regulator of microtubule dynamics protein 3 (Mus musculus (Mouse)).